Reading from the N-terminus, the 122-residue chain is Ribonuclease pancreatic (122 aa).

The span at 1-16 (ETPAEKFQRQHMDTEH) shows a compositional bias: basic and acidic residues. The disordered stretch occupies residues 1-20 (ETPAEKFQRQHMDTEHSTAS). Residues Lys-6 and Arg-9 each coordinate substrate. The active-site Proton acceptor is the His-11. 4 cysteine pairs are disulfide-bonded: Cys-25–Cys-83, Cys-39–Cys-94, Cys-57–Cys-109, and Cys-64–Cys-71. Substrate is bound by residues 40-44 (KPLNT), Lys-65, and Arg-84. His-117 acts as the Proton donor in catalysis.

The protein belongs to the pancreatic ribonuclease family. As to quaternary structure, monomer. Interacts with and forms tight 1:1 complexes with RNH1. Dimerization of two such complexes may occur. Interaction with RNH1 inhibits this protein. In terms of processing, not glycosylated although the sequence N-V-T, a recognition site for carbohydrate attachment, is present. As to expression, pancreas.

The protein resides in the secreted. It carries out the reaction an [RNA] containing cytidine + H2O = an [RNA]-3'-cytidine-3'-phosphate + a 5'-hydroxy-ribonucleotide-3'-[RNA].. The enzyme catalyses an [RNA] containing uridine + H2O = an [RNA]-3'-uridine-3'-phosphate + a 5'-hydroxy-ribonucleotide-3'-[RNA].. Functionally, endonuclease that catalyzes the cleavage of RNA on the 3' side of pyrimidine nucleotides. Acts on single-stranded and double-stranded RNA. The polypeptide is Ribonuclease pancreatic (RNASE1) (Osphranter rufus (Red kangaroo)).